An 87-amino-acid polypeptide reads, in one-letter code: U3-theraphotoxin-Hhn1a 18 (87 aa).

Residues 1–24 (MVNTKASMFLTFAGLVLLFVVCYA) form the signal peptide. Positions 25-52 (SESEEKEFPKEMLSSIFAVDNDFKQEER) are excised as a propeptide. 3 cysteine pairs are disulfide-bonded: Cys-54/Cys-67, Cys-61/Cys-72, and Cys-66/Cys-79.

Belongs to the neurotoxin 10 (Hwtx-1) family. 51 (Hntx-8) subfamily. Hntx-8 sub-subfamily. As to expression, expressed by the venom gland.

Its subcellular location is the secreted. Functionally, ion channel inhibitor. The sequence is that of U3-theraphotoxin-Hhn1a 18 from Cyriopagopus hainanus (Chinese bird spider).